A 953-amino-acid polypeptide reads, in one-letter code: 26S proteasome non-ATPase regulatory subunit 1 (953 aa).

An N-acetylmethionine modification is found at Met1. Residue Thr273 is modified to Phosphothreonine. Residues 277–319 (SVPGSTNTGTVPGPEKDSDSMETEEKTAGAVAGKTPDASPEPK) are disordered. The segment covering 290–303 (PEKDSDSMETEEKT) has biased composition (basic and acidic residues). Lys310 carries the post-translational modification N6-acetyllysine. Thr311 is modified (phosphothreonine). Ser315 carries the phosphoserine modification. PC repeat units lie at residues 403-436 (TATA…PGSA), 441-474 (GGLY…DIVR), 476-510 (GGSL…VTGE), 511-545 (AAGL…EKIL), 547-580 (GLAV…ILRR), 581-616 (SGMY…DVRR), 617-649 (AAVE…PHVR), 651-685 (GAAM…YVRQ), 686-726 (GALI…DVMA), and 729-761 (GAIL…PSVV). N6-acetyllysine is present on Lys720. Phosphothreonine is present on Thr830. The residue at position 834 (Ser834) is a Phosphoserine. Disordered stretches follow at residues 839–881 (AKKK…LDNP) and 930–953 (AHGP…YIDD). 2 stretches are compositionally biased toward basic and acidic residues: residues 842 to 852 (KEKEKEKKEEE) and 859 to 872 (AEKK…KEPE). Positions 936–953 (EEEEQEPEPPEPFEYIDD) are enriched in acidic residues.

It belongs to the proteasome subunit S1 family. As to quaternary structure, component of the 19S proteasome regulatory particle complex. The 26S proteasome consists of a 20S core particle (CP) and two 19S regulatory subunits (RP). The regulatory particle is made of a lid composed of 9 subunits, a base containing 6 ATPases and few additional components including PSMD1. Interacts with ADRM1. Interacts with ZFAND1.

Component of the 26S proteasome, a multiprotein complex involved in the ATP-dependent degradation of ubiquitinated proteins. This complex plays a key role in the maintenance of protein homeostasis by removing misfolded or damaged proteins, which could impair cellular functions, and by removing proteins whose functions are no longer required. Therefore, the proteasome participates in numerous cellular processes, including cell cycle progression, apoptosis, or DNA damage repair. The sequence is that of 26S proteasome non-ATPase regulatory subunit 1 (Psmd1) from Rattus norvegicus (Rat).